Consider the following 455-residue polypeptide: RQC trigger complex subunit RQT4 homolog (455 aa).

Disordered stretches follow at residues 64–98 (STHS…SHPS) and 118–148 (PASR…GVMT). 2 stretches are compositionally biased toward polar residues: residues 65–98 (THSG…SHPS) and 119–130 (ASRNKSQSNNIS). At Ser70 the chain carries Phosphoserine. Ser380 is subject to Phosphoserine.

Component of the RQT (ribosome quality control trigger) complex.

It is found in the cytoplasm. The protein localises to the cytosol. Functionally, probably functions as part of the RQC trigger (RQT) complex that activates the ribosome quality control (RQC) pathway, a pathway that degrades nascent peptide chains during problematic translation. This chain is RQC trigger complex subunit RQT4 homolog, found in Schizosaccharomyces pombe (strain 972 / ATCC 24843) (Fission yeast).